The following is a 276-amino-acid chain: uncharacterized protein (276 aa).

This is an uncharacterized protein from Fowl adenovirus A serotype 1 (strain CELO / Phelps) (FAdV-1).